We begin with the raw amino-acid sequence, 312 residues long: GATA zinc finger domain-containing protein 20 (312 aa).

Disordered regions lie at residues 1–45 (MGKR…PQQP) and 213–232 (TIGS…TNTN). A compositionally biased stretch (low complexity) spans 29-45 (QQQQQQQEQQPQQPQQP). The GATA-type zinc finger occupies 260 to 287 (CYVCGVTETPYWRRGTDEGVMVDLCNAC).

The chain is GATA zinc finger domain-containing protein 20 (gtaT) from Dictyostelium discoideum (Social amoeba).